We begin with the raw amino-acid sequence, 96 residues long: Large ribosomal subunit protein bL21 (96 aa).

The span at 73–84 shows a compositional bias: basic residues; that stretch reads KRRKRYQSRNGH. The interval 73–96 is disordered; it reads KRRKRYQSRNGHRQQMTQIEVVSL. Residues 85 to 96 show a composition bias toward polar residues; sequence RQQMTQIEVVSL.

Belongs to the bacterial ribosomal protein bL21 family. Part of the 50S ribosomal subunit. Contacts protein L20.

Its function is as follows. This protein binds to 23S rRNA in the presence of protein L20. This is Large ribosomal subunit protein bL21 from Chlorobium luteolum (strain DSM 273 / BCRC 81028 / 2530) (Pelodictyon luteolum).